The sequence spans 715 residues: Tegument protein UL46 (715 aa).

Disordered regions lie at residues 432 to 513 (WSAG…CAAQ), 585 to 605 (DDAR…APYE), and 659 to 680 (GSAL…PSPV). Gly residues predominate over residues 444–455 (GPGGHRAGGGTV). Low complexity-rich tracts occupy residues 456-467 (GKRFSGPARQRA) and 475-488 (PTLD…VPEA). The segment covering 664–677 (SPPPRPPPPPPLSP) has biased composition (pro residues).

This sequence belongs to the herpesviridae HHV-1 VP11/12 protein family. As to quaternary structure, interacts with VP16. Interacts with host LCK, PIK3R1, SHC1 AND GRB2; these interactions promote the activation of the PI3K/AKT pathway. Interacts with host YWHAB. Interacts with ICP0; this interaction targets UL46 for degradation by the proteasome. Phosphorylated by host LCK. The phosphorylation seems to be lymphocyte-specific.

The protein localises to the virion tegument. The protein resides in the host cell membrane. Functionally, plays a role in the activation of the host PI3K/AKT pathway to promote cell survival. Interacts with and activates host LCK and thereby recruits downstream partners SHC1, GRB2 and PI3KR1 in order to activate the PI3K pathway by phosphorylating host AKT on its activating residues. This mechanism is inhibited by the viral protein US3 that instead promotes incorporation of UL46 into virions. The chain is Tegument protein UL46 from Human herpesvirus 1 (strain F) (HHV-1).